The following is a 162-amino-acid chain: Sorting nexin-3 (162 aa).

The residue at position 2 (A2) is an N-acetylalanine. The region spanning 27-151 (NFLEIDVSNP…HMFLQDEIID (125 aa)) is the PX domain. The residue at position 43 (R43) is an Omega-N-methylarginine. R70, S72, K95, and R118 together coordinate a 1,2-diacyl-sn-glycero-3-phospho-(1D-myo-inositol-3-phosphate). S72 is subject to Phosphoserine. A Glycyl lysine isopeptide (Lys-Gly) (interchain with G-Cter in SUMO2) cross-link involves residue K95. The tract at residues 147 to 162 (DEIIDKSYTPSKIRHA) is binds predominantly to PtdIns(P5) and weaker to PtdIns(P3) abd PtdIns(P4); involved in neurite outgrowth regulation.

It belongs to the sorting nexin family. In terms of assembly, interacts with VPS26A, VPS29. Interacts with VPS35; the interaction with VPS35 is direct. The association with the retromer CSC subcomplex subunits is proposed to represent a functional distinct retromer variant described as SNX3-retromer complex. Interacts with USP10 and SCNN1A. Interacts with TRFC. Interacts with SNX8; 2 molecules of SNX8 seems to associate with one molecule of SNX3. Interacts with PTPRU. Interacts with MON2 and DOP1B. Post-translationally, ubiquitinated, leading to its proteasomal degradation. Deubiquitinated by USP10. As to expression, highly expressed in developing red cells and hematopoietic tissues.

The protein localises to the early endosome. The protein resides in the cytoplasmic vesicle. It is found in the phagosome. Functionally, phosphoinositide-binding protein required for multivesicular body formation. Specifically binds phosphatidylinositol 3-phosphate (PtdIns(P3)). Can also bind phosphatidylinositol 4-phosphate (PtdIns(P4)), phosphatidylinositol 5-phosphate (PtdIns(P5)) and phosphatidylinositol 3,5-biphosphate (PtdIns(3,5)P2). Plays a role in protein transport between cellular compartments. Together with RAB7A facilitates endosome membrane association of the retromer cargo-selective subcomplex (CSC). May act in part as component of the SNX3-retromer complex which mediates the retrograde endosome-to-TGN transport of WLS distinct from the SNX-BAR retromer pathway. Promotes stability and cell surface expression of epithelial sodium channel (ENAC) subunits SCNN1A and SCNN1G. Not involved in EGFR degradation. Involved in the regulation of phagocytosis in dendritic cells possibly by regulating EEA1 recruitment to the nascent phagosomes. Involved in iron homeostasis through regulation of endocytic recycling of the transferrin receptor Tfrc presuambly by delivering the transferrin:transferrin receptor complex to recycling endosomes; the function may involve the CSC retromer subcomplex. Involved in regulation of neurite outgrowth in primary neurons. The sequence is that of Sorting nexin-3 (Snx3) from Mus musculus (Mouse).